Consider the following 357-residue polypeptide: Queuosine-tRNA galactosyltransferase (357 aa).

It belongs to the glycosyltransferase 2 family.

The protein localises to the cytoplasm. It catalyses the reaction queuosine(34) in tRNA(Tyr) + UDP-alpha-D-galactose = O-5''-beta-D-galactosylqueuosine(34) in tRNA(Tyr) + UDP + H(+). Glycosyltransferase that specifically catalyzes galactosylation of cytoplasmic tRNA(Tyr) modified with queuosine at position 34 (queuosine(34)). Galactosylates the cyclopentene hydroxyl group of queuosine(34) in tRNA(Tyr) to form galactosyl-queuosine(34). Mannosylation of queuosine(34) in tRNA(Tyr) is required to slow-down elongation at cognate codons UAC and suppress stop codon readthrough, thereby regulating protein translation. The polypeptide is Queuosine-tRNA galactosyltransferase (Mus musculus (Mouse)).